A 263-amino-acid chain; its full sequence is Small ribosomal subunit protein uS2 (263 aa).

A disordered region spans residues 228–263 (QLEEPEADLADEDDNGMTTSDDGDAEALDIPDDSDA). The segment covering 230–263 (EEPEADLADEDDNGMTTSDDGDAEALDIPDDSDA) has biased composition (acidic residues).

It belongs to the universal ribosomal protein uS2 family.

The chain is Small ribosomal subunit protein uS2 from Thermosynechococcus vestitus (strain NIES-2133 / IAM M-273 / BP-1).